A 542-amino-acid polypeptide reads, in one-letter code: MAKNIKFDIEARDGLKRGVDALANAVKVTLGPKGRNVIIGKSFGGPTVTKDGVTVAKEIELQDPLENMGAQMVKEVASKTNDLAGDGTTTATVLAQAIVKEGLKNVAAGANPMDLKRGIDKAVEAIVADLTKQAKVVGSDSEKIKQIASISANNDEVIGELIANAFAKVGKEGVITVEEAKGTDTYVDVVEGMQFDRGYLSPYFVTNPEKMDAELENPYILLYDKKVSSLKELLPVLEPVAQSGKPLLIIAEDVDGEALSTLVVNKLRGALKIAAVKAPGFGDRRKAMLEDIAILTGGTVISEERGFTLENTTIEMLGTAKRVTIDKDNTTIVSGAGEADMIKNRVNQIKGQMEASTSDYDKEKLQERLAKLAGGVAVLYVGAASEVEMKEKKDRVDDALHATRAAVEEGIVAGGGVALLRAKNVLKDIKADNADEATGIQIVSRAVEAPLRTIVENAGLEGSVVVAKVAEGSGDFGYNAKTDEYVDMLKAGIIDPKKVTRVALENAASVAGMILTTECALVEIKEENAGGGQMGGGMPGMM.

ATP-binding positions include 29-32 (TLGP), Lys-50, 86-90 (DGTTT), Gly-415, and Asp-495.

This sequence belongs to the chaperonin (HSP60) family. As to quaternary structure, forms a cylinder of 14 subunits composed of two heptameric rings stacked back-to-back. Interacts with the co-chaperonin GroES.

The protein resides in the cytoplasm. It carries out the reaction ATP + H2O + a folded polypeptide = ADP + phosphate + an unfolded polypeptide.. In terms of biological role, together with its co-chaperonin GroES, plays an essential role in assisting protein folding. The GroEL-GroES system forms a nano-cage that allows encapsulation of the non-native substrate proteins and provides a physical environment optimized to promote and accelerate protein folding. The polypeptide is Chaperonin GroEL (Flavobacterium psychrophilum (strain ATCC 49511 / DSM 21280 / CIP 103535 / JIP02/86)).